Here is a 261-residue protein sequence, read N- to C-terminus: Undecaprenyl-diphosphatase (261 aa).

The next 8 helical transmembrane spans lie at 1 to 21, 40 to 60, 79 to 99, 106 to 126, 140 to 160, 185 to 205, 210 to 230, and 239 to 259; these read MTVLQAIVLGLVQGVGEFLPI, GLTFDVALHLGTLIAVVAYFW, GRLFWYLIVASIPGAIFGVLF, IFRSPLLIALTLTLMGLGLWW, VNLFDGIIVGISQALAIIPGV, FLMSVPIIAGAALLKLKELPL, LAFIAGVLTAAVVGFLAIKFL, and YLLFTGYRILLAALIVAVFWL.

The protein belongs to the UppP family.

It localises to the cell membrane. It catalyses the reaction di-trans,octa-cis-undecaprenyl diphosphate + H2O = di-trans,octa-cis-undecaprenyl phosphate + phosphate + H(+). Its function is as follows. Catalyzes the dephosphorylation of undecaprenyl diphosphate (UPP). Confers resistance to bacitracin. The chain is Undecaprenyl-diphosphatase from Moorella thermoacetica (strain ATCC 39073 / JCM 9320).